The sequence spans 243 residues: tRNA pseudouridine synthase A (243 aa).

Asp-54 serves as the catalytic Nucleophile. Tyr-112 provides a ligand contact to substrate.

Belongs to the tRNA pseudouridine synthase TruA family. In terms of assembly, homodimer.

It carries out the reaction uridine(38/39/40) in tRNA = pseudouridine(38/39/40) in tRNA. Formation of pseudouridine at positions 38, 39 and 40 in the anticodon stem and loop of transfer RNAs. The protein is tRNA pseudouridine synthase A of Onion yellows phytoplasma (strain OY-M).